Consider the following 475-residue polypeptide: Glutamate--tRNA ligase (475 aa).

The short motif at 11-21 (PSPTGFLHIGG) is the 'HIGH' region element. Residues 240-244 (KLSKR) carry the 'KMSKS' region motif. K243 lines the ATP pocket.

It belongs to the class-I aminoacyl-tRNA synthetase family. Glutamate--tRNA ligase type 1 subfamily. Monomer.

It is found in the cytoplasm. The catalysed reaction is tRNA(Glu) + L-glutamate + ATP = L-glutamyl-tRNA(Glu) + AMP + diphosphate. Functionally, catalyzes the attachment of glutamate to tRNA(Glu) in a two-step reaction: glutamate is first activated by ATP to form Glu-AMP and then transferred to the acceptor end of tRNA(Glu). The polypeptide is Glutamate--tRNA ligase (Bradyrhizobium diazoefficiens (strain JCM 10833 / BCRC 13528 / IAM 13628 / NBRC 14792 / USDA 110)).